We begin with the raw amino-acid sequence, 1017 residues long: Centriole and centriolar satellite protein OFD1 (1017 aa).

Positions Leu69–Lys101 constitute a LisH domain. Coiled-coil stretches lie at residues Pro188–Val557 and Glu626–Gln659. Residues Pro609 to Gln666 form a mediates homooligomerization region. Disordered regions lie at residues Ala657–Ser676, Ser685–Gly705, Gly721–Asp749, and Leu769–Gly801. Residues Ser664, Ser670, Ser687, Ser722, Ser737, Ser747, Ser791, and Ser823 each carry the phosphoserine modification. The segment covering Ser722–Pro740 has biased composition (low complexity). The stretch at Glu895 to Tyr966 forms a coiled coil. The span at His897–Lys988 shows a compositional bias: basic and acidic residues. The disordered stretch occupies residues His897–Trp1017.

It belongs to the OFD1 family. In terms of assembly, homooligomer. Interacts with LCA5. Interacts with RUVBL1; the interaction is direct and may mediate interaction with the NuA4 histone acetyltransferase complex. Interacts with SDCCAG8; the interaction is direct. Interacts with MAP1LC3B. Interacts with C2CD3; OFD1 may act as a negative regulator of C2CD3. Forms a complex with KIAA0753/OFIP and CEP20/FOR20; the interaction with CEP20 is detected only in the presence of KIAA0753. Interacts with PCM1; this interaction may be mediated by KIAA0753/OFIP. Interacts with TBC1D31; regulates OFD1 activity in cilium assembly. Phosphorylated. Phosphorylation at Ser-737, by the cAMP-dependent protein kinase PKA, triggers ubiquitination and proteasomal degradation of OFD1. Also increases its interaction with TBC1D31 and regulates its function in ciliogenesis. Post-translationally, ubiquitinated by PJA2, upon phosphorylation at Ser-737 by PKA, leads to the proteasomal degradation of OFD1.

It localises to the cytoplasm. The protein localises to the cytoskeleton. It is found in the microtubule organizing center. Its subcellular location is the centrosome. The protein resides in the centriole. It localises to the centriolar satellite. The protein localises to the cilium basal body. It is found in the nucleus. Its function is as follows. Component of the centrioles controlling mother and daughter centrioles length. Recruits to the centriole IFT88 and centriole distal appendage-specific proteins including CEP164. Involved in the biogenesis of the cilium, a centriole-associated function. The cilium is a cell surface projection found in many vertebrate cells required to transduce signals important for development and tissue homeostasis. Plays an important role in development by regulating Wnt signaling and the specification of the left-right axis. Only OFD1 localized at the centriolar satellites is removed by autophagy, which is an important step in the ciliogenesis regulation. This Mus musculus (Mouse) protein is Centriole and centriolar satellite protein OFD1 (Ofd1).